A 669-amino-acid chain; its full sequence is Bestrophin-3 (669 aa).

At M1–L31 the chain is on the cytoplasmic side. A10 is a Ca(2+) binding site. The helical transmembrane segment at L32–R51 threads the bilayer. Residues L52–R60 lie on the Extracellular side of the membrane. Residues Y61–L82 traverse the membrane as a helical segment. Topologically, residues G83–T237 are cytoplasmic. A helical membrane pass occupies residues Q238–R255. Residues Q256–P274 lie on the Extracellular side of the membrane. A helical membrane pass occupies residues I275–L288. The Cytoplasmic portion of the chain corresponds to K289 to F669. The Ca(2+) site is built by Q293, N296, D301, and D304. 4 disordered regions span residues L399–P496, Q533–T560, T591–S627, and I646–F669. Basic residues predominate over residues N440–S451. Residues R475 to P492 are compositionally biased toward low complexity. Over residues Q533–P543 the composition is skewed to polar residues. The span at I646 to E656 shows a compositional bias: basic and acidic residues.

This sequence belongs to the anion channel-forming bestrophin (TC 1.A.46) family. Calcium-sensitive chloride channel subfamily. Expressed in heart. In terms of tissue distribution, expressed in brain, retina/retinal pigment epithelium (RPE) and skeletal muscle. Expressed in acinar cells of parotid glands. Expressed in lung, kidney and testis.

The protein localises to the cell membrane. It catalyses the reaction chloride(in) = chloride(out). Ligand-gated anion channel that allows the movement of chloride monoatomic anions across cell membranes when activated by calcium (Ca2+). In terms of biological role, does not function as calcium-gated chloride channel. In Mus musculus (Mouse), this protein is Bestrophin-3 (Best3).